A 382-amino-acid polypeptide reads, in one-letter code: GTPase Obg (382 aa).

One can recognise an Obg domain in the interval 2–161 (VKFADESKIR…REIIVELNII (160 aa)). The 167-residue stretch at 162–328 (ADIGLVGFPN…VKKAFIRLAD (167 aa)) folds into the OBG-type G domain. Residues 168–175 (GFPNAGKS), 193–197 (FTTKI), 215–218 (DIPG), 282–285 (TKLD), and 309–311 (SLY) each bind GTP. Positions 175 and 195 each coordinate Mg(2+). The interval 360–382 (EEKNDDEHFGATVSLSRKRKPKK) is disordered.

Belongs to the TRAFAC class OBG-HflX-like GTPase superfamily. OBG GTPase family. As to quaternary structure, monomer. Mg(2+) serves as cofactor.

The protein localises to the cytoplasm. Its function is as follows. An essential GTPase which binds GTP, GDP and possibly (p)ppGpp with moderate affinity, with high nucleotide exchange rates and a fairly low GTP hydrolysis rate. Plays a role in control of the cell cycle, stress response, ribosome biogenesis and in those bacteria that undergo differentiation, in morphogenesis control. The sequence is that of GTPase Obg from Treponema denticola (strain ATCC 35405 / DSM 14222 / CIP 103919 / JCM 8153 / KCTC 15104).